The following is a 287-amino-acid chain: ATP synthase gamma chain (287 aa).

It belongs to the ATPase gamma chain family. In terms of assembly, F-type ATPases have 2 components, CF(1) - the catalytic core - and CF(0) - the membrane proton channel. CF(1) has five subunits: alpha(3), beta(3), gamma(1), delta(1), epsilon(1). CF(0) has three main subunits: a, b and c.

The protein localises to the cell inner membrane. Functionally, produces ATP from ADP in the presence of a proton gradient across the membrane. The gamma chain is believed to be important in regulating ATPase activity and the flow of protons through the CF(0) complex. In Enterobacter sp. (strain 638), this protein is ATP synthase gamma chain.